Reading from the N-terminus, the 623-residue chain is Arginine--tRNA ligase (623 aa).

The short motif at 116–126 (ANPIHPLHVGH) is the 'HIGH' region element.

Belongs to the class-I aminoacyl-tRNA synthetase family.

It localises to the cytoplasm. The enzyme catalyses tRNA(Arg) + L-arginine + ATP = L-arginyl-tRNA(Arg) + AMP + diphosphate. This chain is Arginine--tRNA ligase, found in Sulfurisphaera tokodaii (strain DSM 16993 / JCM 10545 / NBRC 100140 / 7) (Sulfolobus tokodaii).